We begin with the raw amino-acid sequence, 184 residues long: Mitochondrial import inner membrane translocase subunit Tim22 (184 aa).

2 cysteine pairs are disulfide-bonded: Cys59-Cys131 and Cys150-Cys169. The next 3 membrane-spanning stretches (helical) occupy residues 64–84, 115–133, and 160–180; these read ALAC…TAGI, YAKN…ECLV, and AGLK…AVID.

Belongs to the Tim17/Tim22/Tim23 family. As to quaternary structure, core component of the TIM22 complex.

The protein localises to the mitochondrion inner membrane. In terms of biological role, essential core component of the TIM22 complex, a complex that mediates the import and insertion of multi-pass transmembrane proteins into the mitochondrial inner membrane. In the TIM22 complex, it constitutes the voltage-activated and signal-gated channel. Forms a twin-pore translocase that uses the membrane potential as external driving force in 2 voltage-dependent steps. The protein is Mitochondrial import inner membrane translocase subunit Tim22 (timm22) of Xenopus laevis (African clawed frog).